Consider the following 146-residue polypeptide: D-aminoacyl-tRNA deacylase (146 aa).

A Gly-cisPro motif, important for rejection of L-amino acids motif is present at residues 137–138; sequence GP.

Belongs to the DTD family. Homodimer.

Its subcellular location is the cytoplasm. It catalyses the reaction glycyl-tRNA(Ala) + H2O = tRNA(Ala) + glycine + H(+). The catalysed reaction is a D-aminoacyl-tRNA + H2O = a tRNA + a D-alpha-amino acid + H(+). An aminoacyl-tRNA editing enzyme that deacylates mischarged D-aminoacyl-tRNAs. Also deacylates mischarged glycyl-tRNA(Ala), protecting cells against glycine mischarging by AlaRS. Acts via tRNA-based rather than protein-based catalysis; rejects L-amino acids rather than detecting D-amino acids in the active site. By recycling D-aminoacyl-tRNA to D-amino acids and free tRNA molecules, this enzyme counteracts the toxicity associated with the formation of D-aminoacyl-tRNA entities in vivo and helps enforce protein L-homochirality. This Bacillus thuringiensis (strain Al Hakam) protein is D-aminoacyl-tRNA deacylase.